We begin with the raw amino-acid sequence, 179 residues long: Large ribosomal subunit protein uL6 (179 aa).

This sequence belongs to the universal ribosomal protein uL6 family. In terms of assembly, part of the 50S ribosomal subunit.

This protein binds to the 23S rRNA, and is important in its secondary structure. It is located near the subunit interface in the base of the L7/L12 stalk, and near the tRNA binding site of the peptidyltransferase center. The sequence is that of Large ribosomal subunit protein uL6 from Prochlorococcus marinus (strain SARG / CCMP1375 / SS120).